The chain runs to 323 residues: Delta(7)-sterol 5(6)-desaturase ERG3B (323 aa).

The next 3 helical transmembrane spans lie at Ala67 to Leu87, Ile112 to Gly132, and Ser150 to Ile170. In terms of domain architecture, Fatty acid hydroxylase spans Ile157–Gly285. The Histidine box-1 signature appears at His171–His175. Positions His184–His188 match the Histidine box-2 motif. The short motif at His262–His266 is the Histidine box-3 element.

Belongs to the sterol desaturase family.

It is found in the endoplasmic reticulum membrane. The enzyme catalyses episterol + 2 Fe(II)-[cytochrome b5] + O2 + 2 H(+) = 5-dehydroepisterol + 2 Fe(III)-[cytochrome b5] + 2 H2O. Its pathway is steroid metabolism; ergosterol biosynthesis. In terms of biological role, C-5 sterol desaturase; part of the third module of ergosterol biosynthesis pathway that includes the late steps of the pathway. ERG3A and ERG3BB catalyze the introduction of a C-5 double bond in the B ring to produce 5-dehydroepisterol. The third module or late pathway involves the ergosterol synthesis itself through consecutive reactions that mainly occur in the endoplasmic reticulum (ER) membrane. Firstly, the squalene synthase ERG9 catalyzes the condensation of 2 farnesyl pyrophosphate moieties to form squalene, which is the precursor of all steroids. Squalene synthase is crucial for balancing the incorporation of farnesyl diphosphate (FPP) into sterol and nonsterol isoprene synthesis. Secondly, squalene is converted into lanosterol by the consecutive action of the squalene epoxidase ERG1 and the lanosterol synthase ERG7. Then, the delta(24)-sterol C-methyltransferase ERG6 methylates lanosterol at C-24 to produce eburicol. Eburicol is the substrate of the sterol 14-alpha demethylase encoded by CYP51A, CYP51B and CYP51C, to yield 4,4,24-trimethyl ergosta-8,14,24(28)-trienol. CYP51B encodes the enzyme primarily responsible for sterol 14-alpha-demethylation, and plays an essential role in ascospore formation. CYP51A encodes an additional sterol 14-alpha-demethylase, induced on ergosterol depletion and responsible for the intrinsic variation in azole sensitivity. The third CYP51 isoform, CYP51C, does not encode a sterol 14-alpha-demethylase, but is required for full virulence on host wheat ears. The C-14 reductase ERG24 then reduces the C14=C15 double bond which leads to 4,4-dimethylfecosterol. A sequence of further demethylations at C-4, involving the C-4 demethylation complex containing the C-4 methylsterol oxidases ERG25, the sterol-4-alpha-carboxylate 3-dehydrogenase ERG26 and the 3-keto-steroid reductase ERG27, leads to the production of fecosterol via 4-methylfecosterol. ERG28 has a role as a scaffold to help anchor ERG25, ERG26 and ERG27 to the endoplasmic reticulum. The C-8 sterol isomerase ERG2 then catalyzes the reaction which results in unsaturation at C-7 in the B ring of sterols and thus converts fecosterol to episterol. The sterol-C5-desaturases ERG3A and ERG3BB then catalyze the introduction of a C-5 double bond in the B ring to produce 5-dehydroepisterol. The C-22 sterol desaturases ERG5A and ERG5B further convert 5-dehydroepisterol into ergosta-5,7,22,24(28)-tetraen-3beta-ol by forming the C-22(23) double bond in the sterol side chain. Finally, ergosta-5,7,22,24(28)-tetraen-3beta-ol is substrate of the C-24(28) sterol reductase ERG4 to produce ergosterol. This is Delta(7)-sterol 5(6)-desaturase ERG3B from Gibberella zeae (strain ATCC MYA-4620 / CBS 123657 / FGSC 9075 / NRRL 31084 / PH-1) (Wheat head blight fungus).